Consider the following 346-residue polypeptide: Phosphoribosylformylglycinamidine cyclo-ligase (346 aa).

It belongs to the AIR synthase family.

Its subcellular location is the cytoplasm. It catalyses the reaction 2-formamido-N(1)-(5-O-phospho-beta-D-ribosyl)acetamidine + ATP = 5-amino-1-(5-phospho-beta-D-ribosyl)imidazole + ADP + phosphate + H(+). It functions in the pathway purine metabolism; IMP biosynthesis via de novo pathway; 5-amino-1-(5-phospho-D-ribosyl)imidazole from N(2)-formyl-N(1)-(5-phospho-D-ribosyl)glycinamide: step 2/2. This is Phosphoribosylformylglycinamidine cyclo-ligase from Bacillus anthracis (strain A0248).